We begin with the raw amino-acid sequence, 90 residues long: Small ribosomal subunit protein bS16 (90 aa).

It belongs to the bacterial ribosomal protein bS16 family.

The polypeptide is Small ribosomal subunit protein bS16 (Streptococcus gordonii (strain Challis / ATCC 35105 / BCRC 15272 / CH1 / DL1 / V288)).